The sequence spans 502 residues: Cytochrome P450 3A40 (502 aa).

Position 443 (Cys-443) interacts with heme.

This sequence belongs to the cytochrome P450 family. Heme is required as a cofactor.

The protein localises to the endoplasmic reticulum membrane. It is found in the microsome membrane. The enzyme catalyses an organic molecule + reduced [NADPH--hemoprotein reductase] + O2 = an alcohol + oxidized [NADPH--hemoprotein reductase] + H2O + H(+). In Oryzias latipes (Japanese rice fish), this protein is Cytochrome P450 3A40 (cyp3a40).